The chain runs to 465 residues: Lactaldehyde dehydrogenase (465 aa).

220–225 serves as a coordination point for NAD(+); sequence GSVEVG. Active-site residues include Glu-240 and Cys-274.

This sequence belongs to the aldehyde dehydrogenase family. In terms of assembly, homotetramer.

It carries out the reaction (S)-lactaldehyde + NAD(+) + H2O = (S)-lactate + NADH + 2 H(+). It functions in the pathway cofactor biosynthesis; coenzyme F420 biosynthesis. Functionally, involved in F420 biosynthesis through the oxidation of lactaldehyde to lactate. The polypeptide is Lactaldehyde dehydrogenase (Methanococcus maripaludis (strain C5 / ATCC BAA-1333)).